The primary structure comprises 176 residues: UBA-like domain-containing protein 1 (176 aa).

Positions 87–176 are disordered; the sequence is SESFHGGGGS…RAHPAMEAER (90 aa). Residues 120 to 137 show a composition bias toward low complexity; the sequence is TPSWPTAASPPGGPQQHQ. Pro residues predominate over residues 138–150; sequence PQPPLWTPAPPSP. Residues 166-176 are compositionally biased toward basic and acidic residues; the sequence is PRAHPAMEAER.

This sequence belongs to the UBALD family.

In Mus musculus (Mouse), this protein is UBA-like domain-containing protein 1 (Ubald1).